The primary structure comprises 858 residues: Protein VACUOLELESS1 (858 aa).

The protein belongs to the VPS16 family. Core component of at least two putative endosomal tethering complexes, the homotypic fusion and vacuole protein sorting (HOPS) complex and the class C core vacuole/endosome tethering (CORVET) complex. Their common core is composed of the class C Vps proteins VPS11, VCL1, VPS18 and VPS33, which in HOPS further associates with VPS39 and VPS41 and in CORVET with VPS3. In terms of tissue distribution, expressed in roots, leaves, stems, siliques, flowers and mature pollen.

It is found in the vacuole membrane. The protein localises to the prevacuolar compartment membrane. In terms of biological role, required for vacuole biogenesis and vacuole enlargment in dividing and expanding cells. Involved in the docking or fusion of prevacuolar vesicles. Important for the function of both male and female gametophytes, but is not essential for the germination and development of pollen. This is Protein VACUOLELESS1 (VCL1) from Arabidopsis thaliana (Mouse-ear cress).